A 256-amino-acid chain; its full sequence is Thiazole synthase (256 aa).

Residue Lys97 is the Schiff-base intermediate with DXP of the active site. 1-deoxy-D-xylulose 5-phosphate-binding positions include Gly158, 184–185 (AG), and 206–207 (NT).

The protein belongs to the ThiG family. Homotetramer. Forms heterodimers with either ThiH or ThiS.

The protein resides in the cytoplasm. The catalysed reaction is [ThiS sulfur-carrier protein]-C-terminal-Gly-aminoethanethioate + 2-iminoacetate + 1-deoxy-D-xylulose 5-phosphate = [ThiS sulfur-carrier protein]-C-terminal Gly-Gly + 2-[(2R,5Z)-2-carboxy-4-methylthiazol-5(2H)-ylidene]ethyl phosphate + 2 H2O + H(+). It functions in the pathway cofactor biosynthesis; thiamine diphosphate biosynthesis. In terms of biological role, catalyzes the rearrangement of 1-deoxy-D-xylulose 5-phosphate (DXP) to produce the thiazole phosphate moiety of thiamine. Sulfur is provided by the thiocarboxylate moiety of the carrier protein ThiS. In vitro, sulfur can be provided by H(2)S. The protein is Thiazole synthase of Pelotomaculum thermopropionicum (strain DSM 13744 / JCM 10971 / SI).